Here is an 829-residue protein sequence, read N- to C-terminus: Periplasmic nitrate reductase (829 aa).

Residues 1–30 (MKMTRRAFVKANAAASAAAVAGITLPASAA) constitute a signal peptide (tat-type signal). A 4Fe-4S Mo/W bis-MGD-type domain is found at 41-97 (ITWDKAPCRFCGTGCSVLVGTQNGKVVATQGDPEAPVNKGLNCIKGYFLSKIMYGQD). Residues cysteine 48, cysteine 51, cysteine 55, and cysteine 83 each contribute to the [4Fe-4S] cluster site. Mo-bis(molybdopterin guanine dinucleotide) contacts are provided by residues lysine 85, glutamine 152, asparagine 177, cysteine 181, 214–221 (WGSNMAEM), 245–249 (STYYH), 264–266 (QSD), methionine 374, glutamine 378, asparagine 484, 510–511 (SD), lysine 533, aspartate 560, and 718–727 (TGRVLEHWHT). Phenylalanine 794 provides a ligand contact to substrate. Mo-bis(molybdopterin guanine dinucleotide)-binding residues include asparagine 802 and lysine 819.

The protein belongs to the prokaryotic molybdopterin-containing oxidoreductase family. NasA/NapA/NarB subfamily. Component of the periplasmic nitrate reductase NapAB complex composed of NapA and NapB. Requires [4Fe-4S] cluster as cofactor. Mo-bis(molybdopterin guanine dinucleotide) is required as a cofactor. Predicted to be exported by the Tat system. The position of the signal peptide cleavage has not been experimentally proven.

The protein localises to the periplasm. The catalysed reaction is 2 Fe(II)-[cytochrome] + nitrate + 2 H(+) = 2 Fe(III)-[cytochrome] + nitrite + H2O. Catalytic subunit of the periplasmic nitrate reductase complex NapAB. Receives electrons from NapB and catalyzes the reduction of nitrate to nitrite. In Vibrio vulnificus (strain YJ016), this protein is Periplasmic nitrate reductase.